We begin with the raw amino-acid sequence, 122 residues long: Large ribosomal subunit protein uL14c (122 aa).

It belongs to the universal ribosomal protein uL14 family. Part of the 50S ribosomal subunit.

The protein localises to the plastid. Its subcellular location is the chloroplast. In terms of biological role, binds to 23S rRNA. This chain is Large ribosomal subunit protein uL14c, found in Zygnema circumcarinatum (Green alga).